The sequence spans 209 residues: Ribonuclease HII (209 aa).

The 191-residue stretch at 19–209 (CTIVGVDEVG…ASGITKLYNK (191 aa)) folds into the RNase H type-2 domain. Residues Asp25, Glu26, and Asp118 each coordinate a divalent metal cation.

This sequence belongs to the RNase HII family. Requires Mn(2+) as cofactor. Mg(2+) serves as cofactor.

The protein resides in the cytoplasm. It carries out the reaction Endonucleolytic cleavage to 5'-phosphomonoester.. In terms of biological role, endonuclease that specifically degrades the RNA of RNA-DNA hybrids. The sequence is that of Ribonuclease HII from Ehrlichia chaffeensis (strain ATCC CRL-10679 / Arkansas).